A 292-amino-acid chain; its full sequence is E3 ubiquitin-protein ligase RNF144A (292 aa).

A TRIAD supradomain region spans residues 16-236; it reads PLVSCKLCLG…YDKGPCRNKL (221 aa). 14 residues coordinate Zn(2+): Cys20, Cys23, Cys43, Cys46, Cys111, Cys116, Cys135, Cys138, Cys143, Cys146, His151, Cys156, Cys185, and Cys188. The RING-type 1 zinc finger occupies 20-70; that stretch reads CKLCLGEYPVEQMTTIAQCQCIFCTLCLKQYVELLIKEGLETAISCPDAAC. An IBR-type zinc finger spans residues 91–156; the sequence is QRYKKLQFER…KASWHPGQGC (66 aa). The RING-type 2; atypical zinc finger occupies 185 to 214; the sequence is CPKCKVYIERDEGCAQMMCKNCKHAFCWYC. The active site involves Cys198. Positions 203, 206, 211, 214, 226, and 232 each coordinate Zn(2+). Residues 250 to 270 traverse the membrane as a helical segment; the sequence is VVGIFAGFGLLLLVASPFLLL.

It belongs to the RBR family. RNF144 subfamily. In terms of assembly, self-associates. Interacts with UBE2L3. Post-translationally, auto-ubiquitinated.

The protein resides in the cell membrane. The protein localises to the cytoplasmic vesicle membrane. It localises to the endosome membrane. Its subcellular location is the endoplasmic reticulum membrane. The enzyme catalyses [E2 ubiquitin-conjugating enzyme]-S-ubiquitinyl-L-cysteine + [acceptor protein]-L-lysine = [E2 ubiquitin-conjugating enzyme]-L-cysteine + [acceptor protein]-N(6)-ubiquitinyl-L-lysine.. Its pathway is protein modification; protein ubiquitination. E3 ubiquitin-protein ligase which accepts ubiquitin from E2 ubiquitin-conjugating enzymes UBE2L3 and UBE2L6 in the form of a thioester and then directly transfers the ubiquitin to targeted substrates. Mediates the ubiquitination and degradation of the DNA damage kinase PRKDC during DNA damage. Positively regulates DNA virus or exogenous cytosolic DNA-triggered innate immune response by mediating STING1 ubiquitination and increasing its 'Lys-6'-linked ubiquitination and translocation from the endoplasmic reticulum to the Golgi leading to downstream signaling pathways. Plays a positive role in EGF-dependent cell proliferation by prolonging EGF/EGFR signaling during EGF stimulation through EGFR ubiquitination. Increases ERK activity independently of EGFR signaling by promoting polyubiquitination and subsequent degradation of VRK3 in the cytosol. The polypeptide is E3 ubiquitin-protein ligase RNF144A (RNF144A) (Homo sapiens (Human)).